A 137-amino-acid chain; its full sequence is MSSLTTDLMLTHRHLNDRGQVAATIDEILNTHKLFSTRHRIIDTSENVDNVIVIADQLFDDRGATIGTYDFYIDVSALPEQVHEGIVIARLAKSTQNRAGIEQTKSMLMLIDGITYDTPFNLLKYAVPGNQHQAAAG.

This is an uncharacterized protein from Mycobacterium leprae (strain TN).